Consider the following 1367-residue polypeptide: Insulin-like growth factor 1 receptor (1367 aa).

A signal peptide spans 1 to 30; that stretch reads MKSGSGGGSPTSLWGLLFLSAALSLWPTSG. C33 and C52 form a disulfide bridge. Residues N51, N102, and N135 are each glycosylated (N-linked (GlcNAc...) asparagine). Cystine bridges form between C150–C178, C182–C205, C192–C211, C215–C224, C219–C230, C231–C239, C235–C248, C251–C260, C264–C276, C282–C303, C307–C321, C324–C328, and C332–C353. N-linked (GlcNAc...) asparagine glycosylation is present at N244. The N-linked (GlcNAc...) asparagine glycan is linked to N314. 2 N-linked (GlcNAc...) asparagine glycosylation sites follow: N417 and N438. C455 and C488 are oxidised to a cystine. 4 Fibronectin type-III domains span residues 491 to 609, 610 to 708, 735 to 828, and 834 to 927; these read DVLH…TNAS, VPSI…TEAE, PERK…TMPA, and IPGP…VQAK. 9 N-linked (GlcNAc...) asparagine glycosylation sites follow: N534, N607, N622, N640, N747, N756, N764, N900, and N913. The Extracellular portion of the chain corresponds to 741–935; sequence DVMQVANTTM…AKTGYENFIH (195 aa). Residues 936 to 959 form a helical membrane-spanning segment; the sequence is LIIALPVAVLLIVGGLVIMLYVFH. Topologically, residues 960–1367 are cytoplasmic; that stretch reads RKRNNSRLGN…ALPLPQSSTC (408 aa). The IRS1- and SHC1-binding motif lies at 977–980; sequence NPEY. Y980 carries the post-translational modification Phosphotyrosine. The Protein kinase domain maps to 999–1274; it reads ITMSRELGQG…SIKEEMEPGF (276 aa). ATP-binding positions include 1005-1013 and K1033; that span reads LGQGSFGMV. The active-site Proton acceptor is D1135. Phosphotyrosine; by autocatalysis is present on residues Y1161, Y1165, and Y1166. Glycyl lysine isopeptide (Lys-Gly) (interchain with G-Cter in ubiquitin) cross-links involve residues K1168 and K1171. Position 1278 is a phosphoserine; by GSK3-beta (S1278). S1282 is subject to Phosphoserine. A disordered region spans residues 1288–1367; it reads PEPEELDLEP…ALPLPQSSTC (80 aa). The segment covering 1290 to 1299 has biased composition (acidic residues); it reads PEELDLEPEN. Positions 1300–1316 are enriched in low complexity; the sequence is MESVPLDPSASSSSLPL. The segment covering 1317–1326 has biased composition (basic and acidic residues); the sequence is PDRHSGHKAE.

Belongs to the protein kinase superfamily. Tyr protein kinase family. Insulin receptor subfamily. As to quaternary structure, tetramer of 2 alpha and 2 beta chains linked by disulfide bonds. The alpha chains contribute to the formation of the ligand-binding domain, while the beta chain carries the kinase domain. Interacts with PIK3R1 and with the PTB/PID domains of IRS1 and SHC1 in vitro when autophosphorylated on tyrosine residues. Forms a hybrid receptor with INSR, the hybrid is a tetramer consisting of 1 alpha chain and 1 beta chain of INSR and 1 alpha chain and 1 beta chain of IGF1R. Interacts with ARRB1 and ARRB2. Interacts with GRB10. Interacts with RACK1. Interacts with SOCS1, SOCS2 and SOCS3. Interacts with 14-3-3 proteins. Interacts with NMD2. Interacts with MAP3K5. Interacts with STAT3. Found in a ternary complex with IGF1 and ITGAV:ITGB3 or ITGA6:ITGB4. Interacts (nascent precursor form) with ZFAND2B. In terms of assembly, (Microbial infection) Interacts with human respiratory syncytial virus (HRSV) fusion glycoprotein F1/F2 heterodimer. Post-translationally, autophosphorylated on tyrosine residues in response to ligand binding. Autophosphorylation occurs in trans, i.e. one subunit of the dimeric receptor phosphorylates tyrosine residues on the other subunit. Autophosphorylation occurs in a sequential manner; Tyr-1165 is predominantly phosphorylated first, followed by phosphorylation of Tyr-1161 and Tyr-1166. While every single phosphorylation increases kinase activity, all three tyrosine residues in the kinase activation loop (Tyr-1165, Tyr-1161 and Tyr-1166) have to be phosphorylated for optimal activity. Can be autophosphorylated at additional tyrosine residues (in vitro). Autophosphorylated is followed by phosphorylation of juxtamembrane tyrosines and C-terminal serines. May also be phosphorylated at Tyr-1161 and Tyr-1166 by mTORC2. Phosphorylation of Tyr-980 is required for IRS1- and SHC1-binding. Phosphorylation of Ser-1278 by GSK-3beta restrains kinase activity and promotes cell surface expression, it requires a priming phosphorylation at Ser-1282. Dephosphorylated by PTPN1. In terms of processing, polyubiquitinated at Lys-1168 and Lys-1171 through both 'Lys-48' and 'Lys-29' linkages, promoting receptor endocytosis and subsequent degradation by the proteasome. Ubiquitination is facilitated by pre-existing phosphorylation. Sumoylated with SUMO1. Post-translationally, controlled by regulated intramembrane proteolysis (RIP). Undergoes metalloprotease-dependent constitutive ectodomain shedding to produce a membrane-anchored 52 kDa C-Terminal fragment which is further processed by presenilin gamma-secretase to yield an intracellular 50 kDa fragment. Found as a hybrid receptor with INSR in muscle, heart, kidney, adipose tissue, skeletal muscle, hepatoma, fibroblasts, spleen and placenta (at protein level). Expressed in a variety of tissues. Overexpressed in tumors, including melanomas, cancers of the colon, pancreas prostate and kidney.

Its subcellular location is the cell membrane. It carries out the reaction L-tyrosyl-[protein] + ATP = O-phospho-L-tyrosyl-[protein] + ADP + H(+). Activated by autophosphorylation at Tyr-1165, Tyr-1161 and Tyr-1166 on the kinase activation loop; phosphorylation at all three tyrosine residues is required for optimal kinase activity. Inhibited by MSC1609119A-1, BMS-754807, PQIP, benzimidazole pyridinone, isoquinolinedione, bis-azaindole, 3-cyanoquinoline, 2,4-bis-arylamino-1,3-pyrimidine, pyrrolopyrimidine, pyrrole-5-carboxaldehyde, picropodophyllin (PPP), tyrphostin derivatives. While most inhibitors bind to the ATP binding pocket, MSC1609119A-1 functions as allosteric inhibitor and binds close to the DFG motif and the activation loop. Functionally, receptor tyrosine kinase which mediates actions of insulin-like growth factor 1 (IGF1). Binds IGF1 with high affinity and IGF2 and insulin (INS) with a lower affinity. The activated IGF1R is involved in cell growth and survival control. IGF1R is crucial for tumor transformation and survival of malignant cell. Ligand binding activates the receptor kinase, leading to receptor autophosphorylation, and tyrosines phosphorylation of multiple substrates, that function as signaling adapter proteins including, the insulin-receptor substrates (IRS1/2), Shc and 14-3-3 proteins. Phosphorylation of IRSs proteins lead to the activation of two main signaling pathways: the PI3K-AKT/PKB pathway and the Ras-MAPK pathway. The result of activating the MAPK pathway is increased cellular proliferation, whereas activating the PI3K pathway inhibits apoptosis and stimulates protein synthesis. Phosphorylated IRS1 can activate the 85 kDa regulatory subunit of PI3K (PIK3R1), leading to activation of several downstream substrates, including protein AKT/PKB. AKT phosphorylation, in turn, enhances protein synthesis through mTOR activation and triggers the antiapoptotic effects of IGFIR through phosphorylation and inactivation of BAD. In parallel to PI3K-driven signaling, recruitment of Grb2/SOS by phosphorylated IRS1 or Shc leads to recruitment of Ras and activation of the ras-MAPK pathway. In addition to these two main signaling pathways IGF1R signals also through the Janus kinase/signal transducer and activator of transcription pathway (JAK/STAT). Phosphorylation of JAK proteins can lead to phosphorylation/activation of signal transducers and activators of transcription (STAT) proteins. In particular activation of STAT3, may be essential for the transforming activity of IGF1R. The JAK/STAT pathway activates gene transcription and may be responsible for the transforming activity. JNK kinases can also be activated by the IGF1R. IGF1 exerts inhibiting activities on JNK activation via phosphorylation and inhibition of MAP3K5/ASK1, which is able to directly associate with the IGF1R. When present in a hybrid receptor with INSR, binds IGF1. PubMed:12138094 shows that hybrid receptors composed of IGF1R and INSR isoform Long are activated with a high affinity by IGF1, with low affinity by IGF2 and not significantly activated by insulin, and that hybrid receptors composed of IGF1R and INSR isoform Short are activated by IGF1, IGF2 and insulin. In contrast, PubMed:16831875 shows that hybrid receptors composed of IGF1R and INSR isoform Long and hybrid receptors composed of IGF1R and INSR isoform Short have similar binding characteristics, both bind IGF1 and have a low affinity for insulin. The protein is Insulin-like growth factor 1 receptor (IGF1R) of Homo sapiens (Human).